The following is a 375-amino-acid chain: Queuine tRNA-ribosyltransferase (375 aa).

D89 (proton acceptor) is an active-site residue. Substrate contacts are provided by residues 89–93 (DSGGF), D143, Q187, and G214. The interval 245 to 251 (GVGKPED) is RNA binding. The active-site Nucleophile is the D264. The tract at residues 269-273 (TRNAR) is RNA binding; important for wobble base 34 recognition. Residues C302, C304, C307, and H333 each coordinate Zn(2+).

It belongs to the queuine tRNA-ribosyltransferase family. As to quaternary structure, homodimer. Within each dimer, one monomer is responsible for RNA recognition and catalysis, while the other monomer binds to the replacement base PreQ1. Zn(2+) is required as a cofactor.

The enzyme catalyses 7-aminomethyl-7-carbaguanine + guanosine(34) in tRNA = 7-aminomethyl-7-carbaguanosine(34) in tRNA + guanine. Its pathway is tRNA modification; tRNA-queuosine biosynthesis. Its function is as follows. Catalyzes the base-exchange of a guanine (G) residue with the queuine precursor 7-aminomethyl-7-deazaguanine (PreQ1) at position 34 (anticodon wobble position) in tRNAs with GU(N) anticodons (tRNA-Asp, -Asn, -His and -Tyr). Catalysis occurs through a double-displacement mechanism. The nucleophile active site attacks the C1' of nucleotide 34 to detach the guanine base from the RNA, forming a covalent enzyme-RNA intermediate. The proton acceptor active site deprotonates the incoming PreQ1, allowing a nucleophilic attack on the C1' of the ribose to form the product. After dissociation, two additional enzymatic reactions on the tRNA convert PreQ1 to queuine (Q), resulting in the hypermodified nucleoside queuosine (7-(((4,5-cis-dihydroxy-2-cyclopenten-1-yl)amino)methyl)-7-deazaguanosine). The protein is Queuine tRNA-ribosyltransferase of Salmonella enteritidis PT4 (strain P125109).